A 377-amino-acid chain; its full sequence is Chaperone protein DnaJ (377 aa).

The J domain maps to 5–70 (DYYQVLGVAK…QKRAAYDQYG (66 aa)). Residues 137–215 (GYDTQIRVPS…CHGAGKTKET (79 aa)) form a CR-type zinc finger. Residues Cys150, Cys153, Cys167, Cys170, Cys189, Cys192, Cys203, and Cys206 each coordinate Zn(2+). 4 CXXCXGXG motif repeats span residues 150 to 157 (CEICHGSG), 167 to 174 (CPTCNGSG), 189 to 196 (CPKCHGTG), and 203 to 210 (CTHCHGAG).

Belongs to the DnaJ family. As to quaternary structure, homodimer. Zn(2+) serves as cofactor.

It is found in the cytoplasm. In terms of biological role, participates actively in the response to hyperosmotic and heat shock by preventing the aggregation of stress-denatured proteins and by disaggregating proteins, also in an autonomous, DnaK-independent fashion. Unfolded proteins bind initially to DnaJ; upon interaction with the DnaJ-bound protein, DnaK hydrolyzes its bound ATP, resulting in the formation of a stable complex. GrpE releases ADP from DnaK; ATP binding to DnaK triggers the release of the substrate protein, thus completing the reaction cycle. Several rounds of ATP-dependent interactions between DnaJ, DnaK and GrpE are required for fully efficient folding. Also involved, together with DnaK and GrpE, in the DNA replication of plasmids through activation of initiation proteins. The polypeptide is Chaperone protein DnaJ (Paraburkholderia phymatum (strain DSM 17167 / CIP 108236 / LMG 21445 / STM815) (Burkholderia phymatum)).